The following is a 406-amino-acid chain: Odorant receptor 10a (406 aa).

The Cytoplasmic segment spans residues 1 to 45 (MSEWLRFLKRDQQLDVYFFAVPRLSLDIMGYWPGKTGDTWPWRSL). Residues 46–66 (IHFAILAIGVATELHAGMCFL) form a helical membrane-spanning segment. At 67-74 (DRQQITLA) the chain is on the extracellular side. A helical transmembrane segment spans residues 75–95 (LETLCPAGTSAVTLLKMFLML). The Cytoplasmic segment spans residues 96 to 143 (RFRQDLSIMWNRLRGLLFDPNWERPEQRDIRLKHSAMAARINFWPLSA). Residues 144-164 (GFFTCTTYNLKPILIAMILYL) form a helical membrane-spanning segment. Residues 165–189 (QNRYEDFVWFTPFNMTMPKVLLNYP) lie on the Extracellular side of the membrane. An N-linked (GlcNAc...) asparagine glycan is attached at Asn178. The chain crosses the membrane as a helical span at residues 190 to 210 (FFPLTYIFIAYTGYVTIFMFG). At 211-281 (GCDGFYFEFC…LTRFFRDRYT (71 aa)) the chain is on the cytoplasmic side. A helical transmembrane segment spans residues 282–302 (IITLAHFVSAAMVIGFSMVNL). The Extracellular segment spans residues 303–308 (LTLGNN). A helical transmembrane segment spans residues 309–329 (GLGAMLYVAYTVAALSQLLVY). The Cytoplasmic segment spans residues 330–372 (CYGGTLVAESSTGLCRAMFSCPWQLFKPKQRRLVQLLILRSQR). A helical membrane pass occupies residues 373–393 (PVSMAVPFFSPSLATFAAILQ). At 394-406 (TSGSIIALVKSFQ) the chain is on the extracellular side.

It belongs to the insect chemoreceptor superfamily. Heteromeric odorant receptor channel (TC 1.A.69) family. Or1a subfamily. Interacts with Orco. Complexes exist early in the endomembrane system in olfactory sensory neurons (OSNs), coupling these complexes to the conserved ciliary trafficking pathway. As to expression, expressed in olfactory sensory neurons in the antenna.

It is found in the cell membrane. In terms of biological role, odorant receptor which mediates acceptance or avoidance behavior, depending on its substrates. The odorant receptor repertoire encodes a large collection of odor stimuli that vary widely in identity, intensity, and duration. May form a complex with Orco to form odorant-sensing units, providing sensitive and prolonged odorant signaling and calcium permeability. Involved in the behavioral responses to esters, and specifically to ethyl hexanoate, benzaldehyde, and acetophenone. The sequence is that of Odorant receptor 10a (Or10a) from Drosophila melanogaster (Fruit fly).